We begin with the raw amino-acid sequence, 262 residues long: Type III pantothenate kinase (262 aa).

10–17 provides a ligand contact to ATP; the sequence is DIGNTTTV. A substrate-binding site is contributed by 110 to 113; sequence GADR. D112 serves as the catalytic Proton acceptor. D134 contacts K(+). T137 is a binding site for ATP. A substrate-binding site is contributed by T189.

Belongs to the type III pantothenate kinase family. As to quaternary structure, homodimer. NH4(+) is required as a cofactor. K(+) serves as cofactor.

The protein localises to the cytoplasm. The catalysed reaction is (R)-pantothenate + ATP = (R)-4'-phosphopantothenate + ADP + H(+). Its pathway is cofactor biosynthesis; coenzyme A biosynthesis; CoA from (R)-pantothenate: step 1/5. Functionally, catalyzes the phosphorylation of pantothenate (Pan), the first step in CoA biosynthesis. This chain is Type III pantothenate kinase, found in Deinococcus radiodurans (strain ATCC 13939 / DSM 20539 / JCM 16871 / CCUG 27074 / LMG 4051 / NBRC 15346 / NCIMB 9279 / VKM B-1422 / R1).